The primary structure comprises 493 residues: Tripartite motif-containing protein 5 (493 aa).

Alanine 2 is subject to N-acetylalanine. The segment at 15 to 59 (CPICLELLTQPLSLDCGHSFCQACLTANHKKSTLDKGERSCPVCR) adopts an RING-type zinc-finger fold. Serine 86 is modified (phosphoserine). The B box-type zinc-finger motif lies at 90 to 132 (QKVDHCARHGEKLLLFCKEDGKVICWLCERSQEHRGHHTFLTE). 4 residues coordinate Zn(2+): cysteine 95, histidine 98, cysteine 117, and histidine 123. The stretch at 131-223 (TEEVAQKYQV…LTKSETEMVQ (93 aa)) forms a coiled coil. Residues 185 to 198 (FEQLRDILDWEESN) form a required for interaction with GABARAP and for autophagy region. The B30.2/SPRY domain occupies 281-493 (LKGMLEVFRE…VPMTLCSPSS (213 aa)).

The protein belongs to the TRIM/RBCC family. Can form homodimers and homotrimers. In addition to lower-order dimerization, also exhibits a higher-order multimerization and both low- and high-order multimerizations are essential for its restriction activity. Interacts with BTBD1 and BTBD2. Interacts with PSMC4, PSMC5, PSMD7 and HSPA8/HSC70. Interacts (via B30.2/SPRY domain) with HSPA1A/B. Interacts with PSMC2, MAP3K7/TAK1, TAB2 and TAB3. Interacts with SQSTM1. Interacts with TRIM6 and TRIM34. Interacts with ULK1 (phosphorylated form), GABARAP, GABARAPL1, GABARAPL2, MAP1LC3A, MAP1LC3C and BECN1. In terms of processing, degraded in a proteasome-independent fashion in the absence of viral infection but in a proteasome-dependent fashion following exposure to restriction sensitive virus. Post-translationally, autoubiquitinated in a RING finger- and UBE2D2-dependent manner. Monoubiquitinated by TRIM21. Deubiquitinated by Yersinia YopJ. Ubiquitination may not lead to proteasomal degradation.

The protein resides in the cytoplasm. Its subcellular location is the nucleus. It carries out the reaction S-ubiquitinyl-[E2 ubiquitin-conjugating enzyme]-L-cysteine + [acceptor protein]-L-lysine = [E2 ubiquitin-conjugating enzyme]-L-cysteine + N(6)-ubiquitinyl-[acceptor protein]-L-lysine.. It participates in protein modification; protein ubiquitination. Its function is as follows. Capsid-specific restriction factor that prevents infection from non-host-adapted retroviruses. Blocks viral replication early in the life cycle, after viral entry but before reverse transcription. In addition to acting as a capsid-specific restriction factor, also acts as a pattern recognition receptor that activates innate immune signaling in response to the retroviral capsid lattice. Binding to the viral capsid triggers its E3 ubiquitin ligase activity, and in concert with the heterodimeric ubiquitin conjugating enzyme complex UBE2V1-UBE2N (also known as UBC13-UEV1A complex) generates 'Lys-63'-linked polyubiquitin chains, which in turn are catalysts in the autophosphorylation of the MAP3K7/TAK1 complex (includes TAK1, TAB2, and TAB3). Activation of the MAP3K7/TAK1 complex by autophosphorylation results in the induction and expression of NF-kappa-B and MAPK-responsive inflammatory genes, thereby leading to an innate immune response in the infected cell. Plays a role in regulating autophagy through activation of autophagy regulator BECN1 by causing its dissociation from its inhibitors BCL2 and TAB2. This chain is Tripartite motif-containing protein 5 (TRIM5), found in Pongo pygmaeus (Bornean orangutan).